The sequence spans 411 residues: F-box/kelch-repeat protein At3g61590 (411 aa).

The F-box domain maps to 37–83 (FSMDSLLPDDLLERILSFLPIASIFRAGTVCKRWNEIVSSRRFLCNF). Kelch repeat units follow at residues 81–135 (CNFS…SSCG), 137–178 (VCFM…MSTS), 196–246 (SIVK…ICNN), 251–299 (MIYS…LMNL), 302–350 (RLVI…EFDE), and 352–401 (FASS…FTGF).

As to quaternary structure, part of a SCF (ASK-cullin-F-box) protein ligase complex. Interacts with SKP1A/ASK1, SKP1B/ASK2, ASK3, ASK9, ASK11, ASK12, ASK13, ASK14, ASK16 and ASK18.

It functions in the pathway protein modification; protein ubiquitination. Functionally, component of SCF(ASK-cullin-F-box) E3 ubiquitin ligase complexes, which may mediate the ubiquitination and subsequent proteasomal degradation of target proteins. The sequence is that of F-box/kelch-repeat protein At3g61590 from Arabidopsis thaliana (Mouse-ear cress).